A 234-amino-acid chain; its full sequence is Small ribosomal subunit protein uS5 (234 aa).

A compositionally biased stretch (polar residues) spans 1–10; that stretch reads MEDIKTTTPE. The tract at residues 1–69 is disordered; that stretch reads MEDIKTTTPE…KDGSGNKPNK (69 aa). Positions 11–31 are enriched in basic and acidic residues; it reads VKNEENKTSEVKEGKALEKNN. Residues 78 to 141 enclose the S5 DRBM domain; it reads LEEKIVGVKK…KSAKNNMYKV (64 aa).

This sequence belongs to the universal ribosomal protein uS5 family. As to quaternary structure, part of the 30S ribosomal subunit. Contacts proteins S4 and S8.

With S4 and S12 plays an important role in translational accuracy. In terms of biological role, located at the back of the 30S subunit body where it stabilizes the conformation of the head with respect to the body. The sequence is that of Small ribosomal subunit protein uS5 from Malacoplasma penetrans (strain HF-2) (Mycoplasma penetrans).